A 477-amino-acid chain; its full sequence is Sporulation-specific protein 77 (477 aa).

The interval 428–452 is disordered; the sequence is SQQRESSNAESESITSSTEEDEEGL. Residues 432-444 show a composition bias toward low complexity; sequence ESSNAESESITSS.

Its subcellular location is the cytoplasm. Required for spore wall assembly and ascus formation. The sequence is that of Sporulation-specific protein 77 (SPO77) from Saccharomyces cerevisiae (strain ATCC 204508 / S288c) (Baker's yeast).